The chain runs to 470 residues: E3 SUMO-protein ligase EGR2 (470 aa).

A compositionally biased stretch (low complexity) spans 126–141 (PPASTTASSSVTSASP). 3 disordered regions span residues 126-153 (PPAS…GVCT), 159-178 (PELD…SGCT), and 184-211 (DPSA…YPSP). Residue Lys247 is modified to N6-acetyllysine; by EP300. The interval 275-344 (GPSAGVTGPG…RPYPCPAEGC (70 aa)) is disordered. Positions 281 to 291 (TGPGASGGGEG) are enriched in gly residues. C2H2-type zinc fingers lie at residues 337 to 361 (YPCP…IRIH), 367 to 389 (FQCR…IRTH), and 395 to 417 (FACD…TKIH). Residues 408-470 (DERKRHTKIH…ASCTSRTRTP (63 aa)) form a disordered region. Over residues 412–422 (RHTKIHLRQKE) the composition is skewed to basic residues. Residues 426–439 (SAPSSSASAQSSAS) are compositionally biased toward low complexity. Over residues 440–450 (GPGGSQAGGSL) the composition is skewed to gly residues.

The protein belongs to the EGR C2H2-type zinc-finger protein family. In terms of assembly, interacts with HCFC1. Interacts with WWP2. Interacts with UBC9. Interacts with CITED1. Interacts (via phosphorylated form) with SFN. Post-translationally, ubiquitinated by WWP2 leading to proteasomal degradation. In terms of processing, acetylated at Lys-247. May be deacetylated by HDAC6, HDAC10 or SIRT1.

The protein localises to the nucleus. Its pathway is protein modification; protein sumoylation. Functionally, sequence-specific DNA-binding transcription factor. Plays a role in hindbrain segmentation by regulating the expression of a subset of homeobox containing genes and in Schwann cell myelination by regulating the expression of genes involved in the formation and maintenance of myelin. Binds to two EGR2-consensus sites EGR2A (5'-CTGTAGGAG-3') and EGR2B (5'-ATGTAGGTG-3') in the HOXB3 enhancer and promotes HOXB3 transcriptional activation. Binds to specific DNA sites located in the promoter region of HOXA4, HOXB2 and ERBB2. Regulates hindbrain segmentation by controlling the expression of Hox genes, such as HOXA4, HOXB3 and HOXB2, and thereby specifying odd and even rhombomeres. Promotes the expression of HOXB3 in the rhombomere r5 in the hindbrain. Regulates myelination in the peripheral nervous system after birth, possibly by regulating the expression of myelin proteins, such as MPZ, and by promoting the differentiation of Schwann cells. Involved in the development of the jaw openener musculature, probably by playing a role in its innervation through trigeminal motor neurons. May play a role in adipogenesis, possibly by regulating the expression of CEBPB. In terms of biological role, E3 SUMO-protein ligase helping SUMO1 conjugation to its coregulators NAB1 and NAB2, whose sumoylation down-regulates EGR2 transcriptional activity. This chain is E3 SUMO-protein ligase EGR2 (Egr2), found in Rattus norvegicus (Rat).